Consider the following 437-residue polypeptide: 3-phosphoshikimate 1-carboxyvinyltransferase (437 aa).

3-phosphoshikimate-binding residues include Lys24, Ser25, and Arg29. Lys24 contacts phosphoenolpyruvate. The phosphoenolpyruvate site is built by Gly95 and Arg123. Ser168, Gln170, Asp317, and Lys344 together coordinate 3-phosphoshikimate. Gln170 contributes to the phosphoenolpyruvate binding site. Asp317 serves as the catalytic Proton acceptor. Residues Arg348 and Arg390 each coordinate phosphoenolpyruvate.

It belongs to the EPSP synthase family. Monomer.

It localises to the cytoplasm. It catalyses the reaction 3-phosphoshikimate + phosphoenolpyruvate = 5-O-(1-carboxyvinyl)-3-phosphoshikimate + phosphate. It functions in the pathway metabolic intermediate biosynthesis; chorismate biosynthesis; chorismate from D-erythrose 4-phosphate and phosphoenolpyruvate: step 6/7. In terms of biological role, catalyzes the transfer of the enolpyruvyl moiety of phosphoenolpyruvate (PEP) to the 5-hydroxyl of shikimate-3-phosphate (S3P) to produce enolpyruvyl shikimate-3-phosphate and inorganic phosphate. The sequence is that of 3-phosphoshikimate 1-carboxyvinyltransferase from Wolinella succinogenes (strain ATCC 29543 / DSM 1740 / CCUG 13145 / JCM 31913 / LMG 7466 / NCTC 11488 / FDC 602W) (Vibrio succinogenes).